A 136-amino-acid polypeptide reads, in one-letter code: uncharacterized protein (136 aa).

This is an uncharacterized protein from Mycoplasma pneumoniae (strain ATCC 29342 / M129 / Subtype 1) (Mycoplasmoides pneumoniae).